Reading from the N-terminus, the 262-residue chain is GTP cyclohydrolase 1 type 2 homolog (262 aa).

Positions 65, 102, 222, and 225 each coordinate a divalent metal cation.

Belongs to the GTP cyclohydrolase I type 2/NIF3 family. Homohexamer.

This is GTP cyclohydrolase 1 type 2 homolog from Streptococcus pyogenes serotype M3 (strain ATCC BAA-595 / MGAS315).